Consider the following 271-residue polypeptide: Putative phosphoenolpyruvate synthase regulatory protein (271 aa).

152-159 (GVSRCGKT) is a binding site for ADP.

Belongs to the pyruvate, phosphate/water dikinase regulatory protein family. PSRP subfamily.

It catalyses the reaction [pyruvate, water dikinase] + ADP = [pyruvate, water dikinase]-phosphate + AMP + H(+). The enzyme catalyses [pyruvate, water dikinase]-phosphate + phosphate + H(+) = [pyruvate, water dikinase] + diphosphate. Bifunctional serine/threonine kinase and phosphorylase involved in the regulation of the phosphoenolpyruvate synthase (PEPS) by catalyzing its phosphorylation/dephosphorylation. The sequence is that of Putative phosphoenolpyruvate synthase regulatory protein from Legionella pneumophila (strain Paris).